The following is a 463-amino-acid chain: ATP-dependent protease ATPase subunit HslU (463 aa).

ATP-binding positions include Val-21, 63-68, Asp-276, Glu-341, and Arg-413; that span reads GVGKTE.

It belongs to the ClpX chaperone family. HslU subfamily. As to quaternary structure, a double ring-shaped homohexamer of HslV is capped on each side by a ring-shaped HslU homohexamer. The assembly of the HslU/HslV complex is dependent on binding of ATP.

The protein localises to the cytoplasm. In terms of biological role, ATPase subunit of a proteasome-like degradation complex; this subunit has chaperone activity. The binding of ATP and its subsequent hydrolysis by HslU are essential for unfolding of protein substrates subsequently hydrolyzed by HslV. HslU recognizes the N-terminal part of its protein substrates and unfolds these before they are guided to HslV for hydrolysis. This is ATP-dependent protease ATPase subunit HslU from Thermotoga neapolitana (strain ATCC 49049 / DSM 4359 / NBRC 107923 / NS-E).